The chain runs to 164 residues: Vasopressin-neurophysin 2-copeptin (164 aa).

The signal sequence occupies residues 1–19; that stretch reads MPDTMLPACFLGLLAFSSA. A disulfide bridge connects residues Cys-20 and Cys-25. Glycine amide is present on Gly-28. Disulfide bonds link Cys-41/Cys-85, Cys-44/Cys-58, Cys-52/Cys-75, Cys-59/Cys-65, Cys-92/Cys-104, Cys-98/Cys-116, and Cys-105/Cys-110. Asn-131 is a glycosylation site (N-linked (GlcNAc...) asparagine).

The protein belongs to the vasopressin/oxytocin family. As to quaternary structure, interacts with vasopressin receptors V1bR/AVPR1B (Ki=85 pM), V1aR/AVPR1A (Ki=0.6 nM) and V2R/AVPR2 (Ki=4.9 nM). Interacts with oxytocin receptor (OXTR) (Ki=110 nM). In terms of assembly, (Microbial infection) May interact with SARS coronavirus-2/SARS-CoV-2; they may form a complex with secreted ACE2.

The protein localises to the secreted. Functionally, specifically binds vasopressin. Its function is as follows. Has a direct antidiuretic action on the kidney, it also causes vasoconstriction of the peripheral vessels. Acts by binding to vasopressin receptors (V1bR/AVPR1B, V1aR/AVPR1A, and V2R/AVPR2). The chain is Vasopressin-neurophysin 2-copeptin (AVP) from Homo sapiens (Human).